The following is a 357-amino-acid chain: Glutamate 5-kinase (357 aa).

Lysine 7 lines the ATP pocket. Substrate contacts are provided by serine 43, aspartate 130, and asparagine 142. ATP-binding positions include 162–163 and 205–211; these read TD and TGGMTTK. One can recognise a PUA domain in the interval 270–353; sequence EGELQLDAGA…PVVVHRDGLV (84 aa).

The protein belongs to the glutamate 5-kinase family.

It is found in the cytoplasm. It carries out the reaction L-glutamate + ATP = L-glutamyl 5-phosphate + ADP. Its pathway is amino-acid biosynthesis; L-proline biosynthesis; L-glutamate 5-semialdehyde from L-glutamate: step 1/2. In terms of biological role, catalyzes the transfer of a phosphate group to glutamate to form L-glutamate 5-phosphate. The protein is Glutamate 5-kinase of Synechococcus sp. (strain CC9605).